The primary structure comprises 465 residues: Phenylalanine--tRNA ligase alpha subunit (465 aa).

L-phenylalanine-binding positions include Thr-309, 348–350, and Phe-388; that span reads QLD. Glu-390 contributes to the Mg(2+) binding site.

It belongs to the class-II aminoacyl-tRNA synthetase family. Phe-tRNA synthetase alpha subunit type 2 subfamily. In terms of assembly, tetramer of two alpha and two beta subunits. The cofactor is Mg(2+).

It is found in the cytoplasm. It catalyses the reaction tRNA(Phe) + L-phenylalanine + ATP = L-phenylalanyl-tRNA(Phe) + AMP + diphosphate + H(+). The chain is Phenylalanine--tRNA ligase alpha subunit from Sulfolobus acidocaldarius (strain ATCC 33909 / DSM 639 / JCM 8929 / NBRC 15157 / NCIMB 11770).